The primary structure comprises 321 residues: Glucokinase (321 aa).

8–13 (GDVGGT) provides a ligand contact to ATP.

The protein belongs to the bacterial glucokinase family.

The protein resides in the cytoplasm. It catalyses the reaction D-glucose + ATP = D-glucose 6-phosphate + ADP + H(+). In Tolumonas auensis (strain DSM 9187 / NBRC 110442 / TA 4), this protein is Glucokinase.